We begin with the raw amino-acid sequence, 240 residues long: MARRPRRSDSSSAEPTLSPQHLLALVRSTIPPIHPAGRPFIAAGLAVAGVGYRHRWARRTGLLAAGACAGFFRHPPRVPPSRAGAIVAPADGVICVIDTAAPPAELSMGDAPLPRVSIFLSVFDAHVQRAPVSGEVVAVQHRPGRFGSADLPAASDDNERNSVRIRTANGAEVVAVQVAGLVARRIVCDAHVGDKLAIGDTYGLIRFGSRLDTYLPPGTEPVVRVGQRTIAGETILADLP.

Ser209 (schiff-base intermediate with substrate; via pyruvic acid) is an active-site residue. At Ser209 the chain carries Pyruvic acid (Ser); by autocatalysis.

Belongs to the phosphatidylserine decarboxylase family. PSD-A subfamily. As to quaternary structure, heterodimer of a large membrane-associated beta subunit and a small pyruvoyl-containing alpha subunit. Pyruvate is required as a cofactor. Post-translationally, is synthesized initially as an inactive proenzyme. Formation of the active enzyme involves a self-maturation process in which the active site pyruvoyl group is generated from an internal serine residue via an autocatalytic post-translational modification. Two non-identical subunits are generated from the proenzyme in this reaction, and the pyruvate is formed at the N-terminus of the alpha chain, which is derived from the carboxyl end of the proenzyme. The post-translation cleavage follows an unusual pathway, termed non-hydrolytic serinolysis, in which the side chain hydroxyl group of the serine supplies its oxygen atom to form the C-terminus of the beta chain, while the remainder of the serine residue undergoes an oxidative deamination to produce ammonia and the pyruvoyl prosthetic group on the alpha chain.

The protein resides in the cell membrane. The catalysed reaction is a 1,2-diacyl-sn-glycero-3-phospho-L-serine + H(+) = a 1,2-diacyl-sn-glycero-3-phosphoethanolamine + CO2. Its pathway is phospholipid metabolism; phosphatidylethanolamine biosynthesis; phosphatidylethanolamine from CDP-diacylglycerol: step 2/2. Its function is as follows. Catalyzes the formation of phosphatidylethanolamine (PtdEtn) from phosphatidylserine (PtdSer). This chain is Phosphatidylserine decarboxylase proenzyme, found in Mycobacterium marinum (strain ATCC BAA-535 / M).